The sequence spans 551 residues: Hydroxymethylpyrimidine/phosphomethylpyrimidine kinase THI21 (551 aa).

Q64 lines the 4-amino-5-hydroxymethyl-2-methylpyrimidine pocket.

The protein in the N-terminal section; belongs to the ThiD family. It in the C-terminal section; belongs to the thiaminase-2 family.

It catalyses the reaction 4-amino-5-hydroxymethyl-2-methylpyrimidine + ATP = 4-amino-2-methyl-5-(phosphooxymethyl)pyrimidine + ADP + H(+). The catalysed reaction is 4-amino-2-methyl-5-(phosphooxymethyl)pyrimidine + ATP = 4-amino-2-methyl-5-(diphosphooxymethyl)pyrimidine + ADP. It functions in the pathway cofactor biosynthesis; thiamine diphosphate biosynthesis; 4-amino-2-methyl-5-diphosphomethylpyrimidine from 5-amino-1-(5-phospho-D-ribosyl)imidazole: step 2/3. It participates in cofactor biosynthesis; thiamine diphosphate biosynthesis; 4-amino-2-methyl-5-diphosphomethylpyrimidine from 5-amino-1-(5-phospho-D-ribosyl)imidazole: step 3/3. Catalyzes the phosphorylation of hydroxymethylpyrimidine phosphate (HMP-P) to HMP-PP, and also probably that of HMP to HMP-P. The chain is Hydroxymethylpyrimidine/phosphomethylpyrimidine kinase THI21 (THI21) from Saccharomyces cerevisiae (strain ATCC 204508 / S288c) (Baker's yeast).